The primary structure comprises 326 residues: Transposase InsH for insertion sequence element IS5H (326 aa).

Belongs to the transposase 11 family.

Functionally, involved in the transposition of the insertion sequence IS5. This Escherichia coli (strain K12) protein is Transposase InsH for insertion sequence element IS5H (insH6).